A 117-amino-acid chain; its full sequence is Phosphoribosyl-ATP pyrophosphatase (117 aa).

Residues 96–105 (GVSGIEEKLS) are compositionally biased toward basic and acidic residues. The segment at 96–117 (GVSGIEEKLSRSQNQPEPTKAE) is disordered. Residues 106–117 (RSQNQPEPTKAE) show a composition bias toward polar residues.

The protein belongs to the PRA-PH family.

It localises to the cytoplasm. The catalysed reaction is 1-(5-phospho-beta-D-ribosyl)-ATP + H2O = 1-(5-phospho-beta-D-ribosyl)-5'-AMP + diphosphate + H(+). It participates in amino-acid biosynthesis; L-histidine biosynthesis; L-histidine from 5-phospho-alpha-D-ribose 1-diphosphate: step 2/9. This chain is Phosphoribosyl-ATP pyrophosphatase, found in Nitrosomonas eutropha (strain DSM 101675 / C91 / Nm57).